Reading from the N-terminus, the 121-residue chain is Large ribosomal subunit protein bL12 (121 aa).

Belongs to the bacterial ribosomal protein bL12 family. Homodimer. Part of the ribosomal stalk of the 50S ribosomal subunit. Forms a multimeric L10(L12)X complex, where L10 forms an elongated spine to which 2 to 4 L12 dimers bind in a sequential fashion. Binds GTP-bound translation factors.

Its function is as follows. Forms part of the ribosomal stalk which helps the ribosome interact with GTP-bound translation factors. Is thus essential for accurate translation. This is Large ribosomal subunit protein bL12 from Pelagibacter ubique (strain HTCC1062).